A 356-amino-acid chain; its full sequence is UDP-N-acetylglucosamine--N-acetylmuramyl-(pentapeptide) pyrophosphoryl-undecaprenol N-acetylglucosamine transferase (356 aa).

Residues 10 to 12 (TAG), Asn123, Arg159, Ser193, Ile240, and Gln284 contribute to the UDP-N-acetyl-alpha-D-glucosamine site.

This sequence belongs to the glycosyltransferase 28 family. MurG subfamily.

The protein localises to the cell membrane. The catalysed reaction is di-trans,octa-cis-undecaprenyl diphospho-N-acetyl-alpha-D-muramoyl-L-alanyl-D-glutamyl-meso-2,6-diaminopimeloyl-D-alanyl-D-alanine + UDP-N-acetyl-alpha-D-glucosamine = di-trans,octa-cis-undecaprenyl diphospho-[N-acetyl-alpha-D-glucosaminyl-(1-&gt;4)]-N-acetyl-alpha-D-muramoyl-L-alanyl-D-glutamyl-meso-2,6-diaminopimeloyl-D-alanyl-D-alanine + UDP + H(+). It participates in cell wall biogenesis; peptidoglycan biosynthesis. In terms of biological role, cell wall formation. Catalyzes the transfer of a GlcNAc subunit on undecaprenyl-pyrophosphoryl-MurNAc-pentapeptide (lipid intermediate I) to form undecaprenyl-pyrophosphoryl-MurNAc-(pentapeptide)GlcNAc (lipid intermediate II). In Corynebacterium glutamicum (strain ATCC 13032 / DSM 20300 / JCM 1318 / BCRC 11384 / CCUG 27702 / LMG 3730 / NBRC 12168 / NCIMB 10025 / NRRL B-2784 / 534), this protein is UDP-N-acetylglucosamine--N-acetylmuramyl-(pentapeptide) pyrophosphoryl-undecaprenol N-acetylglucosamine transferase.